A 795-amino-acid chain; its full sequence is Volume-regulated anion channel subunit LRRC8E (795 aa).

Over 1-22 the chain is Cytoplasmic; it reads MIPVAEFKQFTEQQPAFKVLKP. The chain crosses the membrane as a helical span at residues 23-43; sequence WWDVLAEYLTVAMLMIGVFGC. The Extracellular portion of the chain corresponds to 44-116; the sequence is TLQVTQDKII…YETALHWYAK (73 aa). C54 and C300 are oxidised to a cystine. The N-linked (GlcNAc...) asparagine glycan is linked to N63. A helical membrane pass occupies residues 117–137; it reads YFPYLVVIHTLIFMVCTSFWF. At 138–264 the chain is on the cytoplasmic side; the sequence is KFPGTSSKIE…IRQTVLKVCK (127 aa). A helical transmembrane segment spans residues 265–285; sequence FFAILVYNLIYVEKISFLVAC. The Extracellular portion of the chain corresponds to 286–312; that stretch reads RVETSEITGYASFCCNHTKAHLFSKLA. N301 carries an N-linked (GlcNAc...) asparagine glycan. The chain crosses the membrane as a helical span at residues 313–333; that stretch reads FCYISFVCVYGITCLYTLYWL. The Cytoplasmic segment spans residues 334-795; sequence FHRPLKEYSF…AEVREKMEEE (462 aa). LRR repeat units follow at residues 535-556, 558-578, 582-603, 605-626, 630-651, 653-674, 676-697, 699-720, 722-744, and 745-766; these read QLKV…TDVA, HLQR…NSLK, VLRE…IFSL, ALQE…LSFQ, KLVT…VRKL, SLEQ…LGQC, GLRL…LGLL, SLQH…LFFC, KLRT…AALQ, and ALSR…LGDC.

This sequence belongs to the LRRC8 family. Heterohexamer; oligomerizes with other LRRC8 proteins (LRRC8A, LRRC8C, LRRC8D and/or LRRC8B) to form a heterohexamer. In vivo, the subunit composition may depend primarily on expression levels, and heterooligomeric channels containing various proportions of the different LRRC8 proteins may coexist.

It localises to the cell membrane. Its subcellular location is the endoplasmic reticulum membrane. It is found in the lysosome membrane. It catalyses the reaction chloride(in) = chloride(out). The enzyme catalyses iodide(out) = iodide(in). The catalysed reaction is taurine(out) = taurine(in). It carries out the reaction 2',3'-cGAMP(out) = 2',3'-cGAMP(in). Its function is as follows. Non-essential component of the volume-regulated anion channel (VRAC, also named VSOAC channel), an anion channel required to maintain a constant cell volume in response to extracellular or intracellular osmotic changes. The VRAC channel conducts iodide better than chloride and can also conduct organic osmolytes like taurine. Mediates efflux of amino acids, such as aspartate, in response to osmotic stress. The VRAC channel also mediates transport of immunoreactive cyclic dinucleotide GMP-AMP (2'-3'-cGAMP), an immune messenger produced in response to DNA virus in the cytosol. Channel activity requires LRRC8A plus at least one other family member (LRRC8B, LRRC8C, LRRC8D or LRRC8E); channel characteristics depend on the precise subunit composition. Also plays a role in lysosome homeostasis by forming functional lysosomal VRAC channels in response to low cytoplasmic ionic strength condition: lysosomal VRAC channels are necessary for the formation of large lysosome-derived vacuoles, which store and then expel excess water to maintain cytosolic water homeostasis. The polypeptide is Volume-regulated anion channel subunit LRRC8E (Mus musculus (Mouse)).